We begin with the raw amino-acid sequence, 260 residues long: tRNA pseudouridine synthase C (260 aa).

Asp54 is a catalytic residue.

This sequence belongs to the pseudouridine synthase RluA family.

The enzyme catalyses uridine(65) in tRNA = pseudouridine(65) in tRNA. Responsible for synthesis of pseudouridine from uracil-65 in transfer RNAs. The protein is tRNA pseudouridine synthase C (truC) of Escherichia coli O157:H7.